The chain runs to 398 residues: 2-amino-3-ketobutyrate coenzyme A ligase (398 aa).

111–112 (CF) provides a ligand contact to pyridoxal 5'-phosphate. His136 provides a ligand contact to substrate. Residues Ser185, 210 to 213 (DDSH), 241 to 244 (TLGK), and 274 to 275 (SN) each bind pyridoxal 5'-phosphate. Lys244 is modified (N6-(pyridoxal phosphate)lysine). Arg368 lines the substrate pocket.

This sequence belongs to the class-II pyridoxal-phosphate-dependent aminotransferase family. As to quaternary structure, homodimer. The cofactor is pyridoxal 5'-phosphate.

The catalysed reaction is glycine + acetyl-CoA = (2S)-2-amino-3-oxobutanoate + CoA. The protein operates within amino-acid degradation; L-threonine degradation via oxydo-reductase pathway; glycine from L-threonine: step 2/2. In terms of biological role, catalyzes the cleavage of 2-amino-3-ketobutyrate to glycine and acetyl-CoA. This chain is 2-amino-3-ketobutyrate coenzyme A ligase, found in Escherichia coli (strain K12).